We begin with the raw amino-acid sequence, 624 residues long: Multicopper oxidase elcG (624 aa).

A signal peptide spans 1 to 18 (MACNILNFLTGLLSLSST). Plastocyanin-like domains lie at 48–160 (PGRA…IERG) and 216–373 (CMDA…TIRI). N-linked (GlcNAc...) asparagine glycosylation is present at N65. Residues H96, H98, H140, and H142 each contribute to the Cu cation site. N271, N296, and N464 each carry an N-linked (GlcNAc...) asparagine glycan. The region spanning 474–603 (FLFQDPSQIE…GGMGVVILDG (130 aa)) is the Plastocyanin-like 3 domain. Cu cation is bound by residues H511, H514, H516, H585, C586, H587, and H591.

Belongs to the multicopper oxidase family.

Its pathway is secondary metabolite biosynthesis. Multicopper oxidase; part of the gene cluster that mediates the biosynthesis of elsinochrome C, a perelyenequinone phytotoxin structurally similar to cercosporin. The first step of elsinochrome C biosynthesis is performed by the polyketide synthase elcA which catalyzes the formation of nor-toralactone. The starter unit acyltransferase (SAT) domain of elcA initiates polyketide extension by the selective utilization of acetyl-CoA, which is elongated to the heptaketide in the beta-ketoacyl synthase (KS) domain by successive condensations with six malonyl units introduced by the malonyl acyltransferase (MAT) domain. The product template (PT) domain catalyzes C4-C9 and C2-C11 aldol cyclizations and dehydrations to a trihydroxynaphthalene, which is thought to be delivered to the thioesterase (TE) domain for product release. The bifunctional enzyme elcB then methylates nor-toralactone to toralactone before conducting an unusual oxidative aromatic ring opening. The next step in perylenequinone biosynthesis is an O-methylation at the nascent OH-6 of the elcB product performed by the O-methyltransferase elcD. The oxidative coupling of the two monomeric naphthol units in perylenequinone biosynthesis is catalyzed by the FAD-dependent monooxygenase elcE and the multicopper oxidase elcG. ElcG might catalyze the first intermolecular coupling in a regio- and stereo-selective manner via a phenol radical coupling mechanism and the elcE could forge the second C-C bond intramolecularly via a hydride transfer mechanism. The fasciclin domain-containing protein elcF might also play a role duting this step. The last piece of the puzzle in the biosynthesis of elsinochrome C is the additional annulation by enolate coupling to afford the dihydrobenzo(ghi)perylenequinone system, catalyzed by the FAD-dependent monooxygenase elcH. In Phaeosphaeria nodorum (strain SN15 / ATCC MYA-4574 / FGSC 10173) (Glume blotch fungus), this protein is Multicopper oxidase elcG.